A 481-amino-acid polypeptide reads, in one-letter code: Protein nucleotidyltransferase YdiU (481 aa).

Positions 87, 89, 90, 110, 122, 123, 173, and 180 each coordinate ATP. The active-site Proton acceptor is the aspartate 249. Asparagine 250 and aspartate 259 together coordinate Mg(2+). Aspartate 259 is a binding site for ATP.

Belongs to the SELO family. The cofactor is Mg(2+). It depends on Mn(2+) as a cofactor.

It catalyses the reaction L-seryl-[protein] + ATP = 3-O-(5'-adenylyl)-L-seryl-[protein] + diphosphate. The catalysed reaction is L-threonyl-[protein] + ATP = 3-O-(5'-adenylyl)-L-threonyl-[protein] + diphosphate. It carries out the reaction L-tyrosyl-[protein] + ATP = O-(5'-adenylyl)-L-tyrosyl-[protein] + diphosphate. The enzyme catalyses L-histidyl-[protein] + UTP = N(tele)-(5'-uridylyl)-L-histidyl-[protein] + diphosphate. It catalyses the reaction L-seryl-[protein] + UTP = O-(5'-uridylyl)-L-seryl-[protein] + diphosphate. The catalysed reaction is L-tyrosyl-[protein] + UTP = O-(5'-uridylyl)-L-tyrosyl-[protein] + diphosphate. Nucleotidyltransferase involved in the post-translational modification of proteins. It can catalyze the addition of adenosine monophosphate (AMP) or uridine monophosphate (UMP) to a protein, resulting in modifications known as AMPylation and UMPylation. The polypeptide is Protein nucleotidyltransferase YdiU (Mycobacterium sp. (strain KMS)).